A 197-amino-acid polypeptide reads, in one-letter code: RNA pyrophosphohydrolase (197 aa).

Positions 6–149 (GYRPNVGIVI…KRDVYRKAMK (144 aa)) constitute a Nudix hydrolase domain. Positions 38–59 (GGINDGETPEQAMYRELYEEVG) match the Nudix box motif. The disordered stretch occupies residues 165-197 (LSTNNNDEKKANYSAKKPYSPYRNQDKKRKTRV).

Belongs to the Nudix hydrolase family. RppH subfamily. A divalent metal cation is required as a cofactor.

Accelerates the degradation of transcripts by removing pyrophosphate from the 5'-end of triphosphorylated RNA, leading to a more labile monophosphorylated state that can stimulate subsequent ribonuclease cleavage. This Mannheimia succiniciproducens (strain KCTC 0769BP / MBEL55E) protein is RNA pyrophosphohydrolase.